The following is a 334-amino-acid chain: Ornithine carbamoyltransferase (334 aa).

Residues 57–60, Q84, R108, and 135–138 contribute to the carbamoyl phosphate site; these read STRT and HPTQ. L-ornithine is bound by residues N168, D232, and 236-237; that span reads SM. Carbamoyl phosphate contacts are provided by residues 274-275 and R321; that span reads CL.

This sequence belongs to the aspartate/ornithine carbamoyltransferase superfamily. OTCase family.

It is found in the cytoplasm. The enzyme catalyses carbamoyl phosphate + L-ornithine = L-citrulline + phosphate + H(+). It functions in the pathway amino-acid degradation; L-arginine degradation via ADI pathway; carbamoyl phosphate from L-arginine: step 2/2. Functionally, reversibly catalyzes the transfer of the carbamoyl group from carbamoyl phosphate (CP) to the N(epsilon) atom of ornithine (ORN) to produce L-citrulline. The sequence is that of Ornithine carbamoyltransferase from Haemophilus influenzae (strain PittGG).